Here is a 411-residue protein sequence, read N- to C-terminus: Serine hydroxymethyltransferase (411 aa).

(6S)-5,6,7,8-tetrahydrofolate is bound by residues L117 and 121 to 123 (GHL). The residue at position 226 (K226) is an N6-(pyridoxal phosphate)lysine. Residues E241 and 349–351 (SPF) contribute to the (6S)-5,6,7,8-tetrahydrofolate site.

Belongs to the SHMT family. Homodimer. It depends on pyridoxal 5'-phosphate as a cofactor.

It localises to the cytoplasm. It catalyses the reaction (6R)-5,10-methylene-5,6,7,8-tetrahydrofolate + glycine + H2O = (6S)-5,6,7,8-tetrahydrofolate + L-serine. Its pathway is one-carbon metabolism; tetrahydrofolate interconversion. It participates in amino-acid biosynthesis; glycine biosynthesis; glycine from L-serine: step 1/1. In terms of biological role, catalyzes the reversible interconversion of serine and glycine with tetrahydrofolate (THF) serving as the one-carbon carrier. This reaction serves as the major source of one-carbon groups required for the biosynthesis of purines, thymidylate, methionine, and other important biomolecules. Also exhibits THF-independent aldolase activity toward beta-hydroxyamino acids, producing glycine and aldehydes, via a retro-aldol mechanism. The chain is Serine hydroxymethyltransferase from Macrococcus caseolyticus (strain JCSC5402) (Macrococcoides caseolyticum).